The chain runs to 240 residues: Ribosomal RNA small subunit methyltransferase G (240 aa).

S-adenosyl-L-methionine contacts are provided by residues Gly-79, Phe-84, 130 to 131, and Arg-149; that span reads AE.

The protein belongs to the methyltransferase superfamily. RNA methyltransferase RsmG family.

It is found in the cytoplasm. In terms of biological role, specifically methylates the N7 position of a guanine in 16S rRNA. In Lactobacillus helveticus (strain DPC 4571), this protein is Ribosomal RNA small subunit methyltransferase G.